Here is a 99-residue protein sequence, read N- to C-terminus: Integration host factor subunit alpha (99 aa).

It belongs to the bacterial histone-like protein family. In terms of assembly, heterodimer of an alpha and a beta chain.

In terms of biological role, this protein is one of the two subunits of integration host factor, a specific DNA-binding protein that functions in genetic recombination as well as in transcriptional and translational control. The chain is Integration host factor subunit alpha from Psychrobacter cryohalolentis (strain ATCC BAA-1226 / DSM 17306 / VKM B-2378 / K5).